A 1136-amino-acid polypeptide reads, in one-letter code: Type I inositol polyphosphate 5-phosphatase 13 (1136 aa).

WD repeat units lie at residues 147–185 (ETQT…EAGC), 205–244 (VTTS…VSHD), 259–297 (AHRG…KSLL), 436–475 (EDTR…RDVN), and 515–552 (SHNE…PLDN). Catalytic stretches follow at residues 782–798 (DMVA…FGIT) and 861–876 (KKRI…YRDT). Lys940 is covalently cross-linked (Glycyl lysine isopeptide (Lys-Gly) (interchain with G-Cter in ubiquitin)). Positions 1104-1136 (KNLGGSRRYPTDITRNGSTRPRTEDSVRRGKSR) are disordered. Over residues 1124–1136 (PRTEDSVRRGKSR) the composition is skewed to basic and acidic residues.

The protein belongs to the inositol polyphosphate 5-phosphatase family. In terms of assembly, interacts with KIN10, but not with PHOT1. Mg(2+) serves as cofactor. As to expression, expressed in young seedlings and flowers. Highly expressed in anther and pollen grains, but not in pistils. Not detected in maturated roots, stems and rosette leaves.

It is found in the nucleus. It carries out the reaction 1D-myo-inositol 1,4,5-trisphosphate + H2O = 1D-myo-inositol 1,4-bisphosphate + phosphate. Functionally, converts inositol 1,4,5-trisphosphate (Ins(1,4,5)P3) to inositol 1,4-bisphosphate. Modulates cotyledon vein development through regulating auxin homeostasis. Involved in blue light responses. Decreases the amount of KIN10 degraded by the proteasome under low nutrient conditions. Participates with IP5P12 in the control of Ins(1,4,5)P3/Ca(2+) levels that is crucial for maintaining pollen dormancy and regulating early germination of pollen. May modulate auxin transport by regulating vesicle trafficking and thereby plays a role in root gravitropism. The chain is Type I inositol polyphosphate 5-phosphatase 13 from Arabidopsis thaliana (Mouse-ear cress).